An 87-amino-acid chain; its full sequence is uncharacterized protein (87 aa).

Residues 25-47 (FFWEVCNMILFIIIALCGYLLFS) traverse the membrane as a helical segment.

It is found in the membrane. This is an uncharacterized protein from Bacillus subtilis (strain 168).